We begin with the raw amino-acid sequence, 307 residues long: MLKNKHLLDPSDFTIEEFDEIFKLAHQIMANPKEYQNICNGKILATLFYEPSTRTRLSFESAMLRLGGQVIGFSEPNSSSVSKGESLRDTIKTVNCYADLIAMRHPLEGAAKVASMYSDIPVINAGDGGHQHPTQTLTDLLTIKEYKGNLEGNTIALCGDLKFGRTVHSLIKALSRYKNNKFILISPIELRIPNYIREQILEKNNIEYKEITSLEEGIKEANILYMTRIQRERFVDQSEYERLKDVYVLDEAKMKGAKEDMMVLHPLPRVNEISYEVDEDSRAFYFKQAKCGMYVRMALMAKLLGEA.

R54 and T55 together coordinate carbamoyl phosphate. Residue K83 coordinates L-aspartate. Residues R104, H132, and Q135 each contribute to the carbamoyl phosphate site. L-aspartate contacts are provided by R165 and R228. Carbamoyl phosphate is bound by residues L267 and P268.

It belongs to the aspartate/ornithine carbamoyltransferase superfamily. ATCase family. In terms of assembly, heterododecamer (2C3:3R2) of six catalytic PyrB chains organized as two trimers (C3), and six regulatory PyrI chains organized as three dimers (R2).

It catalyses the reaction carbamoyl phosphate + L-aspartate = N-carbamoyl-L-aspartate + phosphate + H(+). The protein operates within pyrimidine metabolism; UMP biosynthesis via de novo pathway; (S)-dihydroorotate from bicarbonate: step 2/3. Catalyzes the condensation of carbamoyl phosphate and aspartate to form carbamoyl aspartate and inorganic phosphate, the committed step in the de novo pyrimidine nucleotide biosynthesis pathway. This Clostridium perfringens (strain 13 / Type A) protein is Aspartate carbamoyltransferase catalytic subunit.